We begin with the raw amino-acid sequence, 301 residues long: Tetratricopeptide repeat domain-containing protein PYG7, chloroplastic (301 aa).

The N-terminal 61 residues, 1 to 61 (MFESNMVLQT…FHDYVFAEIS (61 aa)), are a transit peptide targeting the chloroplast. 2 helical membrane passes run 82 to 102 (TFLL…AAAA) and 121 to 141 (IQLS…FYVI). TPR repeat units lie at residues 168 to 201 (ATEL…WDGD), 206 to 239 (AQVY…QPGY), and 240 to 273 (VTAW…DPNN).

As to quaternary structure, interacts with PSA3.

It is found in the plastid. It localises to the chloroplast thylakoid membrane. Nuclear genome-encoded factor required for the accumulation of photosystem I (PSI). Functions as a PSI biogenesis factor. Cooperates with PSA3 to promote the stable assembly of PSI in the thylakoid membrane. May target primarily the PsaC subunit. This chain is Tetratricopeptide repeat domain-containing protein PYG7, chloroplastic, found in Arabidopsis thaliana (Mouse-ear cress).